We begin with the raw amino-acid sequence, 365 residues long: Chorismate synthase (365 aa).

A compositionally biased stretch (basic and acidic residues) spans 41 to 51 (IQKELDRRRPG). Positions 41–62 (IQKELDRRRPGQSEVSTPRSEA) are disordered. Arginine 48 contacts NADP(+). FMN is bound by residues 125-127 (RSS), glycine 285, 300-304 (KPTPS), and arginine 327.

The protein belongs to the chorismate synthase family. The cofactor is FMNH2.

It catalyses the reaction 5-O-(1-carboxyvinyl)-3-phosphoshikimate = chorismate + phosphate. Its pathway is metabolic intermediate biosynthesis; chorismate biosynthesis; chorismate from D-erythrose 4-phosphate and phosphoenolpyruvate: step 7/7. In terms of biological role, catalyzes the anti-1,4-elimination of the C-3 phosphate and the C-6 proR hydrogen from 5-enolpyruvylshikimate-3-phosphate (EPSP) to yield chorismate, which is the branch point compound that serves as the starting substrate for the three terminal pathways of aromatic amino acid biosynthesis. This reaction introduces a second double bond into the aromatic ring system. The sequence is that of Chorismate synthase from Methanosarcina acetivorans (strain ATCC 35395 / DSM 2834 / JCM 12185 / C2A).